A 202-amino-acid chain; its full sequence is MSQLDSRSASARIRVFDQQRAEAAVRELLYAIGEDPDRDGLVATPSRVARSYREMFAGLYTDPDSVLNTMFDEDHDELVLVKEIPMYSTCEHHLVAFHGVAHVGYIPGDDGRVTGLSKIARLVDLYAKRPQVQERLTSQIADALMKKLDPRGVIVVIEAEHLCMAMRGVRKPGSVTTTSAVRGLFKTNAASRAEALDLILRK.

Zn(2+) is bound by residues C90, H93, and C163.

The protein belongs to the GTP cyclohydrolase I family. In terms of assembly, toroid-shaped homodecamer, composed of two pentamers of five dimers.

The enzyme catalyses GTP + H2O = 7,8-dihydroneopterin 3'-triphosphate + formate + H(+). It functions in the pathway cofactor biosynthesis; 7,8-dihydroneopterin triphosphate biosynthesis; 7,8-dihydroneopterin triphosphate from GTP: step 1/1. This is GTP cyclohydrolase 1 (folE) from Mycobacterium bovis (strain ATCC BAA-935 / AF2122/97).